Consider the following 358-residue polypeptide: Chorismate synthase (358 aa).

The disordered stretch occupies residues 39–61; sequence ADIQPFLDKRRPGQSRHTTQRQE. The NADP(+) site is built by R48 and R54. Residues 125-127, 237-238, G284, 299-303, and R325 each bind FMN; these read RSS, NA, and KPTSS.

It belongs to the chorismate synthase family. In terms of assembly, homotetramer. It depends on FMNH2 as a cofactor.

It carries out the reaction 5-O-(1-carboxyvinyl)-3-phosphoshikimate = chorismate + phosphate. It participates in metabolic intermediate biosynthesis; chorismate biosynthesis; chorismate from D-erythrose 4-phosphate and phosphoenolpyruvate: step 7/7. Its function is as follows. Catalyzes the anti-1,4-elimination of the C-3 phosphate and the C-6 proR hydrogen from 5-enolpyruvylshikimate-3-phosphate (EPSP) to yield chorismate, which is the branch point compound that serves as the starting substrate for the three terminal pathways of aromatic amino acid biosynthesis. This reaction introduces a second double bond into the aromatic ring system. The protein is Chorismate synthase of Sphingopyxis alaskensis (strain DSM 13593 / LMG 18877 / RB2256) (Sphingomonas alaskensis).